The sequence spans 131 residues: Small ribosomal subunit protein uS9 (131 aa).

Belongs to the universal ribosomal protein uS9 family.

In Mesoplasma florum (strain ATCC 33453 / NBRC 100688 / NCTC 11704 / L1) (Acholeplasma florum), this protein is Small ribosomal subunit protein uS9.